The following is a 295-amino-acid chain: UTP--glucose-1-phosphate uridylyltransferase (295 aa).

Belongs to the UDPGP type 2 family.

The enzyme catalyses alpha-D-glucose 1-phosphate + UTP + H(+) = UDP-alpha-D-glucose + diphosphate. In terms of biological role, may play a role in stationary phase survival. This Haemophilus influenzae (strain ATCC 51907 / DSM 11121 / KW20 / Rd) protein is UTP--glucose-1-phosphate uridylyltransferase (galU).